A 204-amino-acid chain; its full sequence is Translation initiation factor IF-3 (204 aa).

The segment at valine 169 to alanine 204 is disordered.

Belongs to the IF-3 family. As to quaternary structure, monomer.

The protein resides in the cytoplasm. Functionally, IF-3 binds to the 30S ribosomal subunit and shifts the equilibrium between 70S ribosomes and their 50S and 30S subunits in favor of the free subunits, thus enhancing the availability of 30S subunits on which protein synthesis initiation begins. In Deinococcus geothermalis (strain DSM 11300 / CIP 105573 / AG-3a), this protein is Translation initiation factor IF-3.